Consider the following 89-residue polypeptide: NADH-ubiquinone oxidoreductase chain 4L (89 aa).

Helical transmembrane passes span 1 to 21 (MNFS…NRKN), 22 to 42 (IILM…LILI), and 55 to 75 (FAIY…GILV).

The protein belongs to the complex I subunit 4L family.

It is found in the mitochondrion membrane. It catalyses the reaction a ubiquinone + NADH + 5 H(+)(in) = a ubiquinol + NAD(+) + 4 H(+)(out). Functionally, core subunit of the mitochondrial membrane respiratory chain NADH dehydrogenase (Complex I) that is believed to belong to the minimal assembly required for catalysis. Complex I functions in the transfer of electrons from NADH to the respiratory chain. The immediate electron acceptor for the enzyme is believed to be ubiquinone. In Talaromyces marneffei (Penicillium marneffei), this protein is NADH-ubiquinone oxidoreductase chain 4L (nd4L).